The following is a 538-amino-acid chain: MAQGQQPILVLPEGTSRYLGRDAQRMNILAGKILAETVRTTLGPKGMDKMLVDSLGDIVVTNDGVTILKEMDIEHPAAKMLVEVAKTQEDEVGDGTTTAVIIAGELLKKAENLLEMEIHPTIIAMGYRQAAEKAQEILDDIAIDASDRDTLMKVAMTAMTGKGTEKAREPLAELIVDAVKQVEEDGEVEKDHIKIEKKEGAAVDDSTLVQGVIIDKERVHPGMPKKVENAKIALLNCPIEVKETEVDAEIRITDPSQMQAFIEQEEQMIRDMVNSIVDTGANVLFCQKGIDDLAQHYLAKAGVLAVRRVKKSDMEKLSKATGANIVTNIEDLSPEDLGEAGVVSEKKISGEEMIFVEECKEPKAVTILVRGSTEHVVSEVERAIEDAIGVVAATVEDGKVVAGGGAPEIEIAKRLKDYADSISGREQLAVSAFAEALEIVPKTLAENAGLDSIDVLVDLRAAHEESTYMGIDVFDGKIVDMKEAGVIEPHRVKKQAIQSAAEAAEMILRIDDVIAASSSGSSEEGMEEMGGMGGMPPM.

The disordered stretch occupies residues 518-538; it reads SSGSSEEGMEEMGGMGGMPPM. Over residues 528–538 the composition is skewed to gly residues; sequence EMGGMGGMPPM.

This sequence belongs to the TCP-1 chaperonin family. Forms a Heterooligomeric complex of two stacked eight-membered rings.

Functionally, molecular chaperone; binds unfolded polypeptides in vitro, and has a weak ATPase activity. This chain is Thermosome subunit beta (thsB), found in Methanothermobacter thermautotrophicus (strain ATCC 29096 / DSM 1053 / JCM 10044 / NBRC 100330 / Delta H) (Methanobacterium thermoautotrophicum).